We begin with the raw amino-acid sequence, 473 residues long: Aspartyl/glutamyl-tRNA(Asn/Gln) amidotransferase subunit B (473 aa).

It belongs to the GatB/GatE family. GatB subfamily. In terms of assembly, heterotrimer of A, B and C subunits.

It catalyses the reaction L-glutamyl-tRNA(Gln) + L-glutamine + ATP + H2O = L-glutaminyl-tRNA(Gln) + L-glutamate + ADP + phosphate + H(+). The enzyme catalyses L-aspartyl-tRNA(Asn) + L-glutamine + ATP + H2O = L-asparaginyl-tRNA(Asn) + L-glutamate + ADP + phosphate + 2 H(+). Its function is as follows. Allows the formation of correctly charged Asn-tRNA(Asn) or Gln-tRNA(Gln) through the transamidation of misacylated Asp-tRNA(Asn) or Glu-tRNA(Gln) in organisms which lack either or both of asparaginyl-tRNA or glutaminyl-tRNA synthetases. The reaction takes place in the presence of glutamine and ATP through an activated phospho-Asp-tRNA(Asn) or phospho-Glu-tRNA(Gln). The protein is Aspartyl/glutamyl-tRNA(Asn/Gln) amidotransferase subunit B of Sulfurisphaera tokodaii (strain DSM 16993 / JCM 10545 / NBRC 100140 / 7) (Sulfolobus tokodaii).